A 158-amino-acid polypeptide reads, in one-letter code: NKG2-F type II integral membrane protein (158 aa).

The segment covering 1–12 has biased composition (polar residues); that stretch reads MNKQRGTYSEVS. The tract at residues 1-30 is disordered; that stretch reads MNKQRGTYSEVSLAQDPKRQQRKLKGNKSS. At 1-74 the chain is on the cytoplasmic side; it reads MNKQRGTYSE…LPPPERLTAE (74 aa). A helical membrane pass occupies residues 75–95; it reads VLGIICIVLMATVLKTIVLIP. The Extracellular portion of the chain corresponds to 96-158; it reads CIGVLEQNNF…VLQRTLICFL (63 aa).

Can form disulfide-bonded heterodimer with CD94. Natural killer cells.

The protein resides in the membrane. Its function is as follows. May play a role as a receptor for the recognition of MHC class I HLA-E molecules by NK cells. In Pan troglodytes (Chimpanzee), this protein is NKG2-F type II integral membrane protein (KLRC4).